The primary structure comprises 512 residues: Sporulation-regulated protein 3 (512 aa).

The segment at 31-68 is disordered; the sequence is RQSSQGQYAVDSHPPKSPELKHRRQRSSSFVNGKCRNR. A Septin-type G domain is found at 106 to 365; the sequence is NGIDFTLMVA…EKCRSEMLRT (260 aa). The tract at residues 116 to 123 is G1 motif; it reads GQSGLGKT. GTP is bound by residues 116–123, Gly-168, 247–255, and Arg-315; these read GQSGLGKT and KSDLLTKEE. The interval 165–168 is G3 motif; that stretch reads DTPG. A G4 motif region spans residues 246–249; sequence AKSD. Coiled-coil stretches lie at residues 376-406 and 451-496; these read TKSV…LKNY and RDWK…KSSN.

Belongs to the TRAFAC class TrmE-Era-EngA-EngB-Septin-like GTPase superfamily. Septin GTPase family. In terms of assembly, interacts with other septin proteins such as SPR28 to form a ring at the bud neck.

Its subcellular location is the prospore membrane. It localises to the bud neck. Its function is as follows. Septins are GTPases involved in cytokinesis that assemble into filaments and form a ring at the cleavage site. May act by recruiting MYO1 and HOF1, a protein involved in septation, to the site of cleavage. Septins are also involved in cell morphogenesis, bud site selection, chitin deposition, cell cycle regulation, cell compartmentalization and spore wall formation. This is Sporulation-regulated protein 3 (SPR3) from Saccharomyces cerevisiae (strain ATCC 204508 / S288c) (Baker's yeast).